Here is a 364-residue protein sequence, read N- to C-terminus: Phenylalanine dehydrogenase (364 aa).

NAD(+) is bound at residue R62. K86 serves as a coordination point for L-phenylalanine. The Proton donor/acceptor role is filled by K98. NAD(+) is bound by residues D133, S164, T168, 255-256, and 276-278; these read AM and AAN. N278 contacts L-phenylalanine.

It belongs to the Glu/Leu/Phe/Val dehydrogenases family.

It carries out the reaction L-phenylalanine + NAD(+) + H2O = 3-phenylpyruvate + NH4(+) + NADH + H(+). Its pathway is amino-acid biosynthesis; L-phenylalanine biosynthesis; L-phenylalanine from phenylpyruvate (PDH route): step 1/1. Its function is as follows. Catalyzes the reversible NAD(+)-dependent oxidative deamination of L-phenylalanine to phenylpyruvate. The sequence is that of Phenylalanine dehydrogenase from Rhodococcus jostii (strain RHA1).